The sequence spans 663 residues: Sodium/potassium/calcium exchanger 1 (663 aa).

The Extracellular portion of the chain corresponds to 32-128; that stretch reads SPSAIPALLT…DLFSVEERRQ (97 aa). N59, N66, and N100 each carry an N-linked (GlcNAc...) asparagine glycan. A helical membrane pass occupies residues 129–149; it reads GWVVLHIFGMMYVFVALAIVC. The Cytoplasmic segment spans residues 150–173; that stretch reads DEYFVPALGVITEKLQISEDVAGA. The stretch at 170 to 210 is one Alpha-1 repeat; that stretch reads VAGATFMAAGGSAPELFTSLIGVFISHSNVGIGTIVGSAVF. A helical membrane pass occupies residues 174-194; it reads TFMAAGGSAPELFTSLIGVFI. At 195 to 200 the chain is on the extracellular side; that stretch reads SHSNVG. The helical transmembrane segment at 201-221 threads the bilayer; sequence IGTIVGSAVFNILFVIGTCAL. Topologically, residues 222 to 228 are cytoplasmic; the sequence is FSREILH. A helical membrane pass occupies residues 229–253; the sequence is LTWWPLFRDISFYIVDLLMLILFFL. At 254–259 the chain is on the extracellular side; sequence DSVIDW. The chain crosses the membrane as a helical span at residues 260–276; that stretch reads WESLLLLTAYATYVFTM. Residues 277 to 471 are Cytoplasmic-facing; the sequence is KHNVSLEQWV…SLEWPETRKK (195 aa). Disordered stretches follow at residues 308 to 343 and 384 to 465; these read KSSV…SLHN and LTGQ…SLEW. The segment covering 316 to 325 has biased composition (basic and acidic residues); it reads DGTKPADGKK. Polar residues-rich tracts occupy residues 327-343 and 399-412; these read QPTT…SLHN and ASQN…ASDS. A Phosphoserine modification is found at S337. Basic and acidic residues predominate over residues 413 to 423; the sequence is EPSKDKQKEDT. Positions 434–461 are enriched in acidic residues; the sequence is DNSEDSSSDSEDDSDDDSTDDEENDEPL. A helical transmembrane segment spans residues 472–492; that stretch reads QAIYLFLFPIVFPLWSTIPDV. At 493-499 the chain is on the extracellular side; that stretch reads RNPDSKK. A helical transmembrane segment spans residues 500–520; it reads FFVITFFGSIIWIAAFSYLMV. Topologically, residues 521 to 535 are cytoplasmic; the sequence is WWAHQVGETIGISEE. The chain crosses the membrane as a helical span at residues 536–556; that stretch reads IMGLTILAAGTSIPDLITSVI. The Alpha-2 repeat unit spans residues 543–574; that stretch reads AAGTSIPDLITSVIVARKGLGDMAVSSSVGSN. At 557 to 574 the chain is on the extracellular side; sequence VARKGLGDMAVSSSVGSN. A helical membrane pass occupies residues 575-595; that stretch reads IFDITVGLPVPWFLYSVFNGF. Residues 596–604 are Cytoplasmic-facing; it reads SPVAVSSNG. A helical transmembrane segment spans residues 605–625; sequence LFCAIVLLFLMLLFVIISIAL. At 626–632 the chain is on the extracellular side; sequence CKWKMNK. The chain crosses the membrane as a helical span at residues 633–653; that stretch reads ILGVTMFALYFVFLIISVMLE. Topologically, residues 654-663 are cytoplasmic; it reads DRIISCPVSV.

Belongs to the Ca(2+):cation antiporter (CaCA) (TC 2.A.19) family. SLC24A subfamily. Post-translationally, the uncleaved signal sequence is required for efficient membrane targeting and proper membrane integration and topology. Retinal rods. Localizes to the inner segment of rod photoreceptors.

The protein resides in the cell membrane. The enzyme catalyses Ca(2+)(out) + K(+)(out) + 4 Na(+)(in) = Ca(2+)(in) + K(+)(in) + 4 Na(+)(out). Calcium, potassium:sodium antiporter that transports 1 Ca(2+) and 1 K(+) in exchange for 4 Na(+). Critical component of the visual transduction cascade, controlling the calcium concentration of outer segments during light and darkness. Light causes a rapid lowering of cytosolic free calcium in the outer segment of both retinal rod and cone photoreceptors and the light-induced lowering of calcium is caused by extrusion via this protein which plays a key role in the process of light adaptation. This Gallus gallus (Chicken) protein is Sodium/potassium/calcium exchanger 1 (SLC24A1).